Consider the following 130-residue polypeptide: MSAATDQILEQLKTLSLLEASELVKQIEEAFGVSAAAPVGGMMMMAGPGGAAPAEEAVEQTEFEVILDSVPADKKIAVLKIVRELTGLGLKEAKDLVEAAPKAVKEGIAKDAAEDAKKRIEEAGGKVTIK.

It belongs to the bacterial ribosomal protein bL12 family. In terms of assembly, homodimer. Part of the ribosomal stalk of the 50S ribosomal subunit. Forms a multimeric L10(L12)X complex, where L10 forms an elongated spine to which 2 to 4 L12 dimers bind in a sequential fashion. Binds GTP-bound translation factors.

Forms part of the ribosomal stalk which helps the ribosome interact with GTP-bound translation factors. Is thus essential for accurate translation. In Nostoc punctiforme (strain ATCC 29133 / PCC 73102), this protein is Large ribosomal subunit protein bL12.